The sequence spans 103 residues: NADH-quinone oxidoreductase subunit K (103 aa).

Transmembrane regions (helical) follow at residues 1–21 (MIVP…VGGV), 29–49 (ILLI…AFAG), and 62–82 (AVII…ALLV). Positions 84–103 (GRRGGGTDRADSYDRLGEES) are disordered. Basic and acidic residues predominate over residues 88 to 103 (GGTDRADSYDRLGEES).

Belongs to the complex I subunit 4L family. In terms of assembly, NDH-1 is composed of 14 different subunits. Subunits NuoA, H, J, K, L, M, N constitute the membrane sector of the complex.

The protein resides in the cell inner membrane. The enzyme catalyses a quinone + NADH + 5 H(+)(in) = a quinol + NAD(+) + 4 H(+)(out). Its function is as follows. NDH-1 shuttles electrons from NADH, via FMN and iron-sulfur (Fe-S) centers, to quinones in the respiratory chain. The immediate electron acceptor for the enzyme in this species is believed to be ubiquinone. Couples the redox reaction to proton translocation (for every two electrons transferred, four hydrogen ions are translocated across the cytoplasmic membrane), and thus conserves the redox energy in a proton gradient. This chain is NADH-quinone oxidoreductase subunit K, found in Solidesulfovibrio magneticus (strain ATCC 700980 / DSM 13731 / RS-1) (Desulfovibrio magneticus).